A 396-amino-acid chain; its full sequence is Protein TOC75-4, chloroplastic (396 aa).

At methionine 1–aspartate 23 the chain is on the chloroplast intermembrane side. The chain crosses the membrane as a beta stranded span at residues asparagine 24–leucine 32. The Cytoplasmic segment spans residues asparagine 33–aspartate 87. The beta stranded transmembrane segment at leucine 88–arginine 96 threads the bilayer. Residues phenylalanine 97–arginine 140 lie on the Chloroplast intermembrane side of the membrane. Residues aspartate 141–threonine 148 traverse the membrane as a beta stranded segment. Residues glutamate 149–glutamate 156 are Cytoplasmic-facing. The chain crosses the membrane as a beta stranded span at residues leucine 157–glutamate 164. The Chloroplast intermembrane segment spans residues glutamate 165 to proline 271. The beta stranded transmembrane segment at proline 272 to tyrosine 280 threads the bilayer. Residues glycine 281 to valine 292 lie on the Cytoplasmic side of the membrane. A beta stranded transmembrane segment spans residues phenylalanine 293 to valine 301. Residues arginine 302–serine 363 are Chloroplast intermembrane-facing. The beta stranded transmembrane segment at tyrosine 364–leucine 370 threads the bilayer. Residues glycine 371–glycine 384 are Cytoplasmic-facing. A beta stranded transmembrane segment spans residues threonine 385–phenylalanine 392. Residues glycine 393–tyrosine 396 lie on the Chloroplast intermembrane side of the membrane.

It belongs to the TOC75 family. Part of the TOC core complex that includes a protein for the specific recognition of transit peptides surrounded by a ring composed of four proteins forming translocation channels, and four to five GTP-binding proteins providing energy. This core complex can interact with components of the TIC complex to form a larger import complex. Chloroplastic protein precursors also interacts with these complexes. As to expression, expressed ubiquitously at low levels.

It localises to the plastid. It is found in the chloroplast outer membrane. Mediates the insertion of proteins targeted to the outer membrane of chloroplasts. Required for the import of protein precursors into chloroplasts. Forms the voltage-dependent preprotein translocation channels (hydrophilic beta barrel) of the TOC complex in the chloroplastic outer membrane. Required for etioplast formation and/or etioplast-chloroplast transition during deetiolation. In Arabidopsis thaliana (Mouse-ear cress), this protein is Protein TOC75-4, chloroplastic (TOC75-4).